A 559-amino-acid polypeptide reads, in one-letter code: Potassium-transporting ATPase potassium-binding subunit (559 aa).

Helical transmembrane passes span 6–26, 63–83, 131–151, 173–193, 253–273, 283–303, 327–347, 356–376, 379–399, 416–436, 484–504, and 524–544; these read FLLI…LGNV, LLAI…MLML, VGLT…IFAL, ITLW…IQQG, FVQM…FGDV, LLWA…WAEW, FGIL…CGAV, ALGG…FGGV, GLYG…LMIG, LTAL…ALAL, LLAF…MAIA, and GALF…LTFI.

It belongs to the KdpA family. As to quaternary structure, the system is composed of three essential subunits: KdpA, KdpB and KdpC.

It localises to the cell inner membrane. Part of the high-affinity ATP-driven potassium transport (or Kdp) system, which catalyzes the hydrolysis of ATP coupled with the electrogenic transport of potassium into the cytoplasm. This subunit binds the periplasmic potassium ions and delivers the ions to the membrane domain of KdpB through an intramembrane tunnel. This Enterobacter sp. (strain 638) protein is Potassium-transporting ATPase potassium-binding subunit.